Here is a 262-residue protein sequence, read N- to C-terminus: tRNA pseudouridine synthase A (262 aa).

Asp-52 serves as the catalytic Nucleophile. Substrate is bound at residue Tyr-110.

The protein belongs to the tRNA pseudouridine synthase TruA family. Homodimer.

The enzyme catalyses uridine(38/39/40) in tRNA = pseudouridine(38/39/40) in tRNA. Formation of pseudouridine at positions 38, 39 and 40 in the anticodon stem and loop of transfer RNAs. The chain is tRNA pseudouridine synthase A from Hydrogenovibrio crunogenus (strain DSM 25203 / XCL-2) (Thiomicrospira crunogena).